Here is a 151-residue protein sequence, read N- to C-terminus: Deoxyuridine 5'-triphosphate nucleotidohydrolase (151 aa).

Substrate is bound by residues 70-72 (RSG), asparagine 83, 87-89 (LID), and methionine 97.

It belongs to the dUTPase family. It depends on Mg(2+) as a cofactor.

The catalysed reaction is dUTP + H2O = dUMP + diphosphate + H(+). It functions in the pathway pyrimidine metabolism; dUMP biosynthesis; dUMP from dCTP (dUTP route): step 2/2. In terms of biological role, this enzyme is involved in nucleotide metabolism: it produces dUMP, the immediate precursor of thymidine nucleotides and it decreases the intracellular concentration of dUTP so that uracil cannot be incorporated into DNA. In Actinobacillus pleuropneumoniae serotype 7 (strain AP76), this protein is Deoxyuridine 5'-triphosphate nucleotidohydrolase.